A 252-amino-acid polypeptide reads, in one-letter code: Probable transcriptional regulatory protein Moth_1704 (252 aa).

The protein belongs to the TACO1 family.

Its subcellular location is the cytoplasm. The chain is Probable transcriptional regulatory protein Moth_1704 from Moorella thermoacetica (strain ATCC 39073 / JCM 9320).